A 304-amino-acid polypeptide reads, in one-letter code: Non-specific ribonucleoside hydrolase RihC (304 aa).

Residue His-233 is part of the active site.

The protein belongs to the IUNH family. RihC subfamily.

Hydrolyzes both purine and pyrimidine ribonucleosides with a broad-substrate specificity. The protein is Non-specific ribonucleoside hydrolase RihC of Shigella boydii serotype 18 (strain CDC 3083-94 / BS512).